The sequence spans 145 residues: Acidic phospholipase A2 1 (145 aa).

The first 21 residues, 1 to 21, serve as a signal peptide directing secretion; the sequence is MYPAHLLVLLAVCVSLLGATA. A propeptide spanning residues 22-27 is cleaved from the precursor; the sequence is IPPLPL. Intrachain disulfides connect C38–C98, C54–C144, C56–C72, C71–C125, C78–C118, C87–C111, and C105–C116. Ca(2+) contacts are provided by Y55, G57, and G59. H75 is a catalytic residue. A Ca(2+)-binding site is contributed by D76. D119 is a catalytic residue.

Belongs to the phospholipase A2 family. Group I subfamily. D49 sub-subfamily. In terms of assembly, monomer. The cofactor is Ca(2+). Expressed by the venom gland.

It localises to the secreted. The enzyme catalyses a 1,2-diacyl-sn-glycero-3-phosphocholine + H2O = a 1-acyl-sn-glycero-3-phosphocholine + a fatty acid + H(+). Its function is as follows. PLA2 catalyzes the calcium-dependent hydrolysis of the 2-acyl groups in 3-sn-phosphoglycerides. The chain is Acidic phospholipase A2 1 from Laticauda semifasciata (Black-banded sea krait).